Here is a 444-residue protein sequence, read N- to C-terminus: Pineal opsin (444 aa).

The segment at 1-20 (MDALQESPPSHHSLPSALPS) is disordered. The Extracellular portion of the chain corresponds to 1-46 (MDALQESPPSHHSLPSALPSATGGNGTVATMHNPFERPLEGIAPWN). Low complexity predominate over residues 7 to 20 (SPPSHHSLPSALPS). Residue Asn25 is glycosylated (N-linked (GlcNAc...) asparagine). The helical transmembrane segment at 47–71 (FTMLAALMGTITALSLGENFAVIVV) threads the bilayer. The Cytoplasmic portion of the chain corresponds to 72–83 (TARFRQLRQPLN). Residues 84-108 (YVLVNLAAADLLVSAIGGSVSFFTN) form a helical membrane-spanning segment. Residues 109-123 (IKGYFFLGVHACVLE) lie on the Extracellular side of the membrane. Cys120 and Cys197 are disulfide-bonded. A helical membrane pass occupies residues 124 to 143 (GFAVTYFGVVALWSLALLAF). The Cytoplasmic portion of the chain corresponds to 144 to 162 (ERYFVICRPLGNFRLQSKH). Residues 163–186 (AVLGLAVVWVFSLACTLPPVLGWS) form a helical membrane-spanning segment. At 187-210 (SYRPSMIGTTCEPNWYSGELHDHT) the chain is on the extracellular side. The chain crosses the membrane as a helical span at residues 211-238 (FILMFFSTCFIFPLAVIFFSYGKLIQKL). The Cytoplasmic segment spans residues 239–260 (KKASETQRGLESTRRAEQQVTR). A helical membrane pass occupies residues 261-284 (MVVVMILAFLVCWMPYATFSIVVT). The Extracellular portion of the chain corresponds to 285-292 (ACPTIHLD). Residues 293-317 (PLLAAVPAFFSKTATVYNPVIYIFM) traverse the membrane as a helical segment. Lys304 carries the N6-(retinylidene)lysine modification. The Cytoplasmic portion of the chain corresponds to 318–444 (NKQFRDCFVQ…SESVSKICPV (127 aa)). Cys331 is lipidated: S-palmitoyl cysteine. Disordered stretches follow at residues 341-360 (QTAGAQDTEHTASVNTQSPG) and 388-420 (EPTMSAAGSMGAPPNKSTAPCQQQGQQQQQQGT). A compositionally biased stretch (low complexity) spans 409–419 (QQQGQQQQQQG).

Belongs to the G-protein coupled receptor 1 family. Opsin subfamily. Phosphorylated on some or all of the serine and threonine residues present in the C-terminal region. In terms of tissue distribution, pineal gland.

The protein localises to the membrane. In Petromyzon marinus (Sea lamprey), this protein is Pineal opsin.